Here is a 293-residue protein sequence, read N- to C-terminus: Ribosomal protein L11 methyltransferase (293 aa).

Positions 145, 166, 188, and 230 each coordinate S-adenosyl-L-methionine.

Belongs to the methyltransferase superfamily. PrmA family.

It localises to the cytoplasm. It carries out the reaction L-lysyl-[protein] + 3 S-adenosyl-L-methionine = N(6),N(6),N(6)-trimethyl-L-lysyl-[protein] + 3 S-adenosyl-L-homocysteine + 3 H(+). Functionally, methylates ribosomal protein L11. This is Ribosomal protein L11 methyltransferase from Shewanella baltica (strain OS155 / ATCC BAA-1091).